The primary structure comprises 157 residues: Ribosomal RNA large subunit methyltransferase H (157 aa).

Residues Leu73, Gly104, and 123-128 (LGPLTL) contribute to the S-adenosyl-L-methionine site.

The protein belongs to the RNA methyltransferase RlmH family. Homodimer.

It is found in the cytoplasm. The enzyme catalyses pseudouridine(1915) in 23S rRNA + S-adenosyl-L-methionine = N(3)-methylpseudouridine(1915) in 23S rRNA + S-adenosyl-L-homocysteine + H(+). In terms of biological role, specifically methylates the pseudouridine at position 1915 (m3Psi1915) in 23S rRNA. In Xylella fastidiosa (strain M23), this protein is Ribosomal RNA large subunit methyltransferase H.